We begin with the raw amino-acid sequence, 285 residues long: Polyamine aminopropyltransferase (285 aa).

One can recognise a PABS domain in the interval 5 to 241 (DNWYIEHFQP…GWWSVTMASK (237 aa)). Residue glutamine 35 participates in S-methyl-5'-thioadenosine binding. 2 residues coordinate spermidine: histidine 66 and aspartate 90. S-methyl-5'-thioadenosine-binding positions include aspartate 110 and 141–142 (DG). Aspartate 160 (proton acceptor) is an active-site residue. 160–163 (DSTD) is a binding site for spermidine. Proline 167 lines the S-methyl-5'-thioadenosine pocket.

Belongs to the spermidine/spermine synthase family. As to quaternary structure, homodimer or homotetramer.

The protein localises to the cytoplasm. The enzyme catalyses S-adenosyl 3-(methylsulfanyl)propylamine + putrescine = S-methyl-5'-thioadenosine + spermidine + H(+). The protein operates within amine and polyamine biosynthesis; spermidine biosynthesis; spermidine from putrescine: step 1/1. Catalyzes the irreversible transfer of a propylamine group from the amino donor S-adenosylmethioninamine (decarboxy-AdoMet) to putrescine (1,4-diaminobutane) to yield spermidine. The polypeptide is Polyamine aminopropyltransferase (Xanthomonas axonopodis pv. citri (strain 306)).